A 106-amino-acid chain; its full sequence is Toxin-like structure LSTX-D4 (106 aa).

The signal sequence occupies residues 1–20 (MMKVLVVVALLVTLISYSSS). Positions 21 to 41 (EGIGDLEADELLSLMANEQTR) are excised as a propeptide. 4 cysteine pairs are disulfide-bonded: cysteine 45–cysteine 60, cysteine 52–cysteine 69, cysteine 59–cysteine 85, and cysteine 71–cysteine 83.

This sequence belongs to the neurotoxin 19 (CSTX) family. 02 (D7) subfamily. As to expression, expressed by the venom gland.

The protein resides in the secreted. In Lycosa singoriensis (Wolf spider), this protein is Toxin-like structure LSTX-D4.